The primary structure comprises 170 residues: Ureidoglycolate lyase (170 aa).

The protein belongs to the ureidoglycolate lyase family. As to quaternary structure, homodimer. The cofactor is Ni(2+).

It carries out the reaction (S)-ureidoglycolate = urea + glyoxylate. Its pathway is nitrogen metabolism; (S)-allantoin degradation. Functionally, catalyzes the catabolism of the allantoin degradation intermediate (S)-ureidoglycolate, generating urea and glyoxylate. Involved in the utilization of allantoin as nitrogen source. The sequence is that of Ureidoglycolate lyase from Pseudomonas syringae pv. tomato (strain ATCC BAA-871 / DC3000).